Here is a 636-residue protein sequence, read N- to C-terminus: Threonine--tRNA ligase (636 aa).

The TGS domain occupies 1–63 (MNEINVTLPD…ADGARVEIVT (63 aa)). Residues 243-534 (DHRKLGRELD…LIEHFAGNFP (292 aa)) are catalytic. 3 residues coordinate Zn(2+): cysteine 335, histidine 386, and histidine 511.

This sequence belongs to the class-II aminoacyl-tRNA synthetase family. In terms of assembly, homodimer. Requires Zn(2+) as cofactor.

Its subcellular location is the cytoplasm. The enzyme catalyses tRNA(Thr) + L-threonine + ATP = L-threonyl-tRNA(Thr) + AMP + diphosphate + H(+). Catalyzes the attachment of threonine to tRNA(Thr) in a two-step reaction: L-threonine is first activated by ATP to form Thr-AMP and then transferred to the acceptor end of tRNA(Thr). Also edits incorrectly charged L-seryl-tRNA(Thr). The polypeptide is Threonine--tRNA ligase (Geobacter sp. (strain M21)).